The following is a 53-amino-acid chain: MKHVNTLLMQELRLLICELKRLRLSAVSDPDFSQEKIHAELDSLLCKLSRHFD.

In terms of biological role, no function has yet been ascribed to K protein. The chain is K protein (K) from Escherichia phage alpha3 (Bacteriophage alpha-3).